The following is a 202-amino-acid chain: MMTVEVFSVIILVLLFLILALTLLFVLLNKRTRSFVIRTFTGLFRSKHTTSQKNFYDNLTSTLLRLSTDKIGAIIAIENQDSLESYVNIGYRVTSDFSPELLVTIFYNKQSPLHDGAVIVRDYQIVSVSSYFPMTRQLIDVSYGSRHRSALGLTEKCDAIVFIVSETTGKISVAVRGVIKTLSSNSDRLQDQIIHYLTVKPG.

The helical transmembrane segment at 6-26 threads the bilayer; the sequence is VFSVIILVLLFLILALTLLFV. In terms of domain architecture, DAC spans 29-185; sequence NKRTRSFVIR…RGVIKTLSSN (157 aa).

Belongs to the adenylate cyclase family. DacB/CdaS subfamily. As to quaternary structure, probably oligomerizes.

The protein resides in the cell membrane. It carries out the reaction 2 ATP = 3',3'-c-di-AMP + 2 diphosphate. In terms of biological role, catalyzes the condensation of 2 ATP molecules into cyclic di-AMP (c-di-AMP), a second messenger used to regulate differing processes in different bacteria. In Mycoplasma pneumoniae (strain ATCC 29342 / M129 / Subtype 1) (Mycoplasmoides pneumoniae), this protein is Diadenylate cyclase.